A 584-amino-acid polypeptide reads, in one-letter code: MKDSFKNSWAIYRRLLGYLLGYWKVLLLSMLSMAVAALTEPAVAKLLKPLIDGGFVNKDPQVIMWVPLAIIGIYLIRGLAGFINEYTASWLTGQLVQRLRQQMFAKLVNLPARYYDEHQSGRLMSRITNDVNQVTEAGFNVITVTVRDGLTALGMLGLMLTTDWQLTLICLVVMPAVTYCMRLVGQRLRGLARQNQQHMAQMTQVLAESIQCQRAIKVYGGQEREMARFDHTATSVRRNQVKQSAASAANTGVTQLMIACALAAILYFAGLRAQHGGLTAGDFMVFLTAMLGLFAPVKRISSVSQAMQRGLAAAESVFAFIDEPGEPDDGASALPATRGRLSFDAVSFAYPNVDSPALSGIDLEIQPGETVALVGSSGSGKTTLASLVPRFYEPSAGRLLLDGVPLADIPLRQLRGHIALVSQQVELFNDTVAANIAYGREDASREEIVEAARAANAMEFIEGLPDGLETVIGENGARLSGGQRQRLAIARALLKNAPLLILDEATSALDTQSERLVQAALENLMKNRTTIVIAHRLSTIENADRIVVMHQGRLAEQGRHQALLEQGGLYARLHSLQFSEPQAD.

5 helical membrane-spanning segments follow: residues 15–35 (LLGY…SMAV), 63–83 (IMWV…AGFI), 153–173 (LGML…CLVV), 251–271 (TGVT…FAGL), and 277–297 (GLTA…FAPV). The 283-residue stretch at 27–309 (LLSMLSMAVA…ISSVSQAMQR (283 aa)) folds into the ABC transmembrane type-1 domain. In terms of domain architecture, ABC transporter spans 341–576 (LSFDAVSFAY…GGLYARLHSL (236 aa)). 375–382 (GSSGSGKT) serves as a coordination point for ATP.

Belongs to the ABC transporter superfamily. Lipid exporter (TC 3.A.1.106) family. As to quaternary structure, homodimer.

The protein localises to the cell inner membrane. It catalyses the reaction ATP + H2O + lipid A-core oligosaccharideSide 1 = ADP + phosphate + lipid A-core oligosaccharideSide 2.. In terms of biological role, involved in lipopolysaccharide (LPS) biosynthesis. Translocates lipid A-core from the inner to the outer leaflet of the inner membrane. Transmembrane domains (TMD) form a pore in the inner membrane and the ATP-binding domain (NBD) is responsible for energy generation. This is ATP-dependent lipid A-core flippase from Chromobacterium violaceum (strain ATCC 12472 / DSM 30191 / JCM 1249 / CCUG 213 / NBRC 12614 / NCIMB 9131 / NCTC 9757 / MK).